Here is a 950-residue protein sequence, read N- to C-terminus: Protocadherin alpha-3 (950 aa).

The first 29 residues, 1–29 (MLFSWREDPGAQCLLLSLLLLAASEVGSG), serve as a signal peptide directing secretion. Cadherin domains are found at residues 30–133 (QLHY…APVF), 134–242 (PMAV…APAF), 243–350 (ERTI…VPEL), 351–455 (VIQS…APAF), 456–565 (SQSE…APAL), and 581–678 (VPRS…APKA). The Extracellular portion of the chain corresponds to 30 to 697 (QLHYSVSEEA…GPEAALVDVN (668 aa)). Residues asparagine 257 and asparagine 265 are each glycosylated (N-linked (GlcNAc...) asparagine). A glycan (N-linked (GlcNAc...) asparagine) is linked at asparagine 548. The chain crosses the membrane as a helical span at residues 698–718 (VYLIVAICAVSSLLVLTLLLY). Topologically, residues 719–950 (TALRCSAPPT…GNSTTDNSDQ (232 aa)) are cytoplasmic. 2 PXXP repeats span residues 734-737 (PGKP) and 774-777 (PSLP). The segment at 734–894 (PGKPTLVCSS…PDKFIIPGSP (161 aa)) is 6 X 4 AA repeats of P-X-X-P. Disordered regions lie at residues 777–806 (PPCP…NPDW), 831–856 (GPGG…EVSP), and 869–950 (FKYG…NSDQ). Residues 782–797 (SRDREEKQDVDVDLSA) show a composition bias toward basic and acidic residues. 4 PXXP repeats span residues 799 to 802 (PRQP), 832 to 835 (PGGP), 873 to 876 (PGNP), and 891 to 894 (PGSP). Basic and acidic residues predominate over residues 909-923 (DKSDFITFGKKEETK).

Its subcellular location is the cell membrane. Its function is as follows. Potential calcium-dependent cell-adhesion protein. May be involved in the establishment and maintenance of specific neuronal connections in the brain. In Homo sapiens (Human), this protein is Protocadherin alpha-3 (PCDHA3).